The primary structure comprises 389 residues: Cellobiose 2-epimerase (389 aa).

Belongs to the cellobiose 2-epimerase family. As to quaternary structure, monomer.

It catalyses the reaction D-cellobiose = beta-D-glucosyl-(1-&gt;4)-D-mannopyranose. Its function is as follows. Catalyzes the reversible epimerization of cellobiose to 4-O-beta-D-glucopyranosyl-D-mannose (Glc-Man). Catalyzes epimerization but also isomerization for beta-1,4- and alpha-1,4-gluco-oligosaccharides. Can use cellobiose, lactose, cellotriose, maltose and maltotriose. The polypeptide is Cellobiose 2-epimerase (Dictyoglomus turgidum (strain DSM 6724 / Z-1310)).